Reading from the N-terminus, the 108-residue chain is Nitrogenase-stabilizing/protective protein NifW (108 aa).

Belongs to the NifW family. In terms of assembly, homotrimer; associates with NifD.

Its function is as follows. May protect the nitrogenase Fe-Mo protein from oxidative damage. This is Nitrogenase-stabilizing/protective protein NifW from Zymomonas mobilis subsp. mobilis (strain ATCC 31821 / ZM4 / CP4).